A 660-amino-acid polypeptide reads, in one-letter code: Peroxisomal acyl-coenzyme A oxidase 1 (660 aa).

Phosphoserine is present on Ser-26. Position 65 is an N6-acetyllysine (Lys-65). Residues Lys-89 and Lys-90 each carry the N6-succinyllysine modification. Positions 139 and 178 each coordinate FAD. Lys-216 carries the post-translational modification N6-acetyllysine. Lys-241 is subject to N6-succinyllysine. N6-acetyllysine is present on residues Lys-255, Lys-267, and Lys-272. N6-succinyllysine is present on Lys-349. Catalysis depends on Glu-421, which acts as the Proton acceptor. N6-acetyllysine; alternate is present on residues Lys-437 and Lys-446. 2 positions are modified to N6-succinyllysine; alternate: Lys-437 and Lys-446. Lys-500 is subject to N6-acetyllysine. Position 512 is an N6-acetyllysine; alternate (Lys-512). At Lys-512 the chain carries N6-succinyllysine; alternate. Lys-542 carries the N6-succinyllysine modification. Position 637 is an N6-acetyllysine; alternate (Lys-637). Lys-637 carries the N6-succinyllysine; alternate modification. Lys-643 is subject to N6-succinyllysine. Ser-649 is modified (phosphoserine). Lys-651 is modified (N6-acetyllysine). At Lys-654 the chain carries N6-succinyllysine. A Microbody targeting signal motif is present at residues 658 to 660; sequence SKL.

This sequence belongs to the acyl-CoA oxidase family. Homodimer. Interacts with LONP2. It depends on FAD as a cofactor.

It localises to the peroxisome. It carries out the reaction a 2,3-saturated acyl-CoA + O2 = a (2E)-enoyl-CoA + H2O2. The enzyme catalyses hexadecanoyl-CoA + O2 = (2E)-hexadecenoyl-CoA + H2O2. The catalysed reaction is dodecanoyl-CoA + O2 = (2E)-dodecenoyl-CoA + H2O2. It catalyses the reaction octanoyl-CoA + O2 = (2E)-octenoyl-CoA + H2O2. It carries out the reaction decanoyl-CoA + O2 = (2E)-decenoyl-CoA + H2O2. The enzyme catalyses tetradecanoyl-CoA + O2 = (2E)-tetradecenoyl-CoA + H2O2. The catalysed reaction is hexadecanedioyl-CoA + O2 = (2E)-hexadecenedioyl-CoA + H2O2. It catalyses the reaction tetracosanoyl-CoA + O2 = (2E)-tetracosenoyl-CoA + H2O2. It carries out the reaction glutaryl-CoA + O2 = (2E)-glutaconyl-CoA + H2O2. The enzyme catalyses hexanoyl-CoA + O2 = (2E)-hexenoyl-CoA + H2O2. The catalysed reaction is octadecanoyl-CoA + O2 = (2E)-octadecenoyl-CoA + H2O2. It catalyses the reaction (5Z,8Z,11Z,14Z,17Z)-eicosapentaenoyl-CoA + O2 = (2E,5Z,8Z,11Z,14Z,17Z)-icosahexaenoyl-CoA + H2O2. It carries out the reaction (6Z,9Z,12Z,15Z,18Z,21Z)-tetracosahexaenoyl-CoA + O2 = (2E,6Z,9Z,12Z,15Z,18Z,21Z)-tetracosaheptaenoyl-CoA + H2O2. It participates in lipid metabolism; peroxisomal fatty acid beta-oxidation. Functionally, involved in the initial and rate-limiting step of peroxisomal beta-oxidation of straight-chain saturated and unsaturated very-long-chain fatty acids. Catalyzes the desaturation of fatty acyl-CoAs such as palmitoyl-CoA (hexadecanoyl-CoA) to 2-trans-enoyl-CoAs ((2E)-enoyl-CoAs) such as (2E)-hexadecenoyl-CoA, and donates electrons directly to molecular oxygen (O(2)), thereby producing hydrogen peroxide (H(2)O(2)). The protein is Peroxisomal acyl-coenzyme A oxidase 1 of Bos taurus (Bovine).